Reading from the N-terminus, the 115-residue chain is Holo-[acyl-carrier-protein] synthase (115 aa).

Positions 8 and 50 each coordinate Mg(2+).

The protein belongs to the P-Pant transferase superfamily. AcpS family. Mg(2+) serves as cofactor.

Its subcellular location is the cytoplasm. It carries out the reaction apo-[ACP] + CoA = holo-[ACP] + adenosine 3',5'-bisphosphate + H(+). Its function is as follows. Transfers the 4'-phosphopantetheine moiety from coenzyme A to a Ser of acyl-carrier-protein. The protein is Holo-[acyl-carrier-protein] synthase of Arthrobacter sp. (strain FB24).